Reading from the N-terminus, the 917-residue chain is Nitrate reductase [NADH] 1 (917 aa).

Residues 62-81 (DSYDDSSSDDEDESHNRNVP) form a disordered region. Over residues 63–74 (SYDDSSSDDEDE) the composition is skewed to acidic residues. Cys197 lines the Mo-molybdopterin pocket. The region spanning 545–620 (SKMYSISEVR…LEDYRIGELI (76 aa)) is the Cytochrome b5 heme-binding domain. Heme contacts are provided by His580 and His603. One can recognise an FAD-binding FR-type domain in the interval 660–772 (REKIPVRLIE…KGPLGHIEYK (113 aa)). Residues 712-715 (RAYT), 729-733 (VVKVY), Phe734, Phe741, 746-748 (LMS), and Thr799 each bind FAD.

It belongs to the nitrate reductase family. Homodimer. FAD serves as cofactor. Heme is required as a cofactor. It depends on Mo-molybdopterin as a cofactor. In terms of tissue distribution, root, leaf, and shoot.

The enzyme catalyses nitrite + NAD(+) + H2O = nitrate + NADH + H(+). Functionally, nitrate reductase is a key enzyme involved in the first step of nitrate assimilation in plants, fungi and bacteria. The polypeptide is Nitrate reductase [NADH] 1 (NIA1) (Arabidopsis thaliana (Mouse-ear cress)).